Reading from the N-terminus, the 234-residue chain is DNA repair protein RecO (234 aa).

It belongs to the RecO family.

Functionally, involved in DNA repair and RecF pathway recombination. This is DNA repair protein RecO from Coxiella burnetii (strain RSA 331 / Henzerling II).